A 929-amino-acid chain; its full sequence is Valine--tRNA ligase (929 aa).

The 'HIGH' region motif lies at 40–50 (PNVTGHLHMGH). Positions 522-526 (KMSKS) match the 'KMSKS' region motif. Residue lysine 525 coordinates ATP. Residues 855–926 (LAGLIDKEAE…LEQQHAEITD (72 aa)) are a coiled coil.

Belongs to the class-I aminoacyl-tRNA synthetase family. ValS type 1 subfamily. As to quaternary structure, monomer.

The protein localises to the cytoplasm. The catalysed reaction is tRNA(Val) + L-valine + ATP = L-valyl-tRNA(Val) + AMP + diphosphate. Functionally, catalyzes the attachment of valine to tRNA(Val). As ValRS can inadvertently accommodate and process structurally similar amino acids such as threonine, to avoid such errors, it has a 'posttransfer' editing activity that hydrolyzes mischarged Thr-tRNA(Val) in a tRNA-dependent manner. The sequence is that of Valine--tRNA ligase from Nitrosococcus oceani (strain ATCC 19707 / BCRC 17464 / JCM 30415 / NCIMB 11848 / C-107).